The primary structure comprises 160 residues: MMSQLTHINASGEANMVDVSNKADTVREARAEAYVRMAPETLQLILSGQHHKGDVFATARIAGIQAAKRTWELIPLCHPLLLSKVEVQLEALPEQSSVRIESLCKLSGKTGVEMEALTAASVAALTIYDMCKAVQKDIVIENVRLLEKSGGKSGHFKVDA.

Substrate contacts are provided by residues 76–78 and 114–115; these read LCH and ME. Residue Asp129 is part of the active site.

This sequence belongs to the MoaC family. As to quaternary structure, homohexamer; trimer of dimers.

The catalysed reaction is (8S)-3',8-cyclo-7,8-dihydroguanosine 5'-triphosphate = cyclic pyranopterin phosphate + diphosphate. It functions in the pathway cofactor biosynthesis; molybdopterin biosynthesis. Functionally, catalyzes the conversion of (8S)-3',8-cyclo-7,8-dihydroguanosine 5'-triphosphate to cyclic pyranopterin monophosphate (cPMP). The chain is Cyclic pyranopterin monophosphate synthase from Vibrio cholerae serotype O1 (strain ATCC 39541 / Classical Ogawa 395 / O395).